A 99-amino-acid chain; its full sequence is Goannatyrotoxin-Vere1 (99 aa).

The signal sequence occupies residues 1–28; that stretch reads MIASMKPWPLVMVAALCILFCLGTLVDA. Tyr-64 bears the Tyrosine amide mark. Residues 68–99 constitute a propeptide, C-terminal extension; the sequence is SSPETLMSELIFGENSNSDHSSRSRFDDSYMW.

This sequence belongs to the NPY family. In terms of tissue distribution, expressed by the mandibular venom gland.

It localises to the secreted. In terms of biological role, shows a potent unique triphasic action, rapid biphasic hypertension followed by prolonged hypotension. In Varanus eremius (Rusty desert monitor), this protein is Goannatyrotoxin-Vere1.